Reading from the N-terminus, the 75-residue chain is UPF0270 protein PFL_4336 (75 aa).

Belongs to the UPF0270 family.

In Pseudomonas fluorescens (strain ATCC BAA-477 / NRRL B-23932 / Pf-5), this protein is UPF0270 protein PFL_4336.